Reading from the N-terminus, the 284-residue chain is MLHNIQSILQFLLFVSSVQALETGGLKSKPPNLKLLECFEFKKNYWIVGHAFHTSSVQFKDECLRMCLTSSIRKAKCLSAMHVPNDDECVISDQNQVTKPDLFIENDTPGTFTVNFFRNICVDPPDAEGVDRFEARLQGYKGGEGIIEFAQAVGKNTQVMVVISGLKENSLYEINFLPDTKEKGGQCHRKSRVNGEGKTLMIVETDHTGMAVEPWKVIDFDGFEENVISKTIVVVEKSTQTIVDCGSIRLATASSNSSTTRTSSSTGLKFTTGLLIILVVFLFL.

An N-terminal signal peptide occupies residues 1 to 20; that stretch reads MLHNIQSILQFLLFVSSVQA. Positions 38-121 constitute an Apple domain; that stretch reads CFEFKKNYWI…FTVNFFRNIC (84 aa). Intrachain disulfides connect Cys-38/Cys-121, Cys-63/Cys-89, and Cys-67/Cys-77. N-linked (GlcNAc...) asparagine glycosylation occurs at Asn-256. A helical transmembrane segment spans residues 264-284; it reads SSTGLKFTTGLLIILVVFLFL.

It is found in the membrane. This is an uncharacterized protein from Caenorhabditis elegans.